The chain runs to 146 residues: MAVRIRMKKMGRTHRPFFRVCAVDQRNPRDGRVIEELGTYDPMCPETDARTTLKADRVDYWIGVGAQPSDKVAVLIKKYGTDGSHLEAQKAAVERLGRRKDYTPPPEAPAPKAAPVAEAPAEEAPAEEPAAEASTDDAPAAEATTE.

The segment covering 84-102 (SHLEAQKAAVERLGRRKDY) has biased composition (basic and acidic residues). The tract at residues 84-146 (SHLEAQKAAV…DAPAAEATTE (63 aa)) is disordered. The segment covering 110–119 (APKAAPVAEA) has biased composition (low complexity). Residues 120-130 (PAEEAPAEEPA) are compositionally biased toward acidic residues. Residues 131–146 (AEASTDDAPAAEATTE) are compositionally biased toward low complexity.

The protein belongs to the bacterial ribosomal protein bS16 family.

The polypeptide is Small ribosomal subunit protein bS16 (Rhodopirellula baltica (strain DSM 10527 / NCIMB 13988 / SH1)).